The following is a 307-amino-acid chain: D-alanine--D-alanine ligase (307 aa).

Positions 101-301 (KTVMRAAGVS…FGELVRWMVE (201 aa)) constitute an ATP-grasp domain. Residue 127-182 (PLTPPYVVKPIAEGSSMGVIIVRDERSHPPQILASDEWVYGEEVLAETYVAGRELT) coordinates ATP. Positions 251, 268, and 270 each coordinate Mg(2+).

Belongs to the D-alanine--D-alanine ligase family. Requires Mg(2+) as cofactor. The cofactor is Mn(2+).

It localises to the cytoplasm. It catalyses the reaction 2 D-alanine + ATP = D-alanyl-D-alanine + ADP + phosphate + H(+). It functions in the pathway cell wall biogenesis; peptidoglycan biosynthesis. In terms of biological role, cell wall formation. The polypeptide is D-alanine--D-alanine ligase (Methylorubrum extorquens (strain PA1) (Methylobacterium extorquens)).